Reading from the N-terminus, the 170-residue chain is RNA pyrophosphohydrolase (170 aa).

The 144-residue stretch at 6–149 (GFRPNVGIVI…KRDVYRRALK (144 aa)) folds into the Nudix hydrolase domain. A Nudix box motif is present at residues 38–59 (GGIDDGETPEQAMYRELYEEVG).

This sequence belongs to the Nudix hydrolase family. RppH subfamily. The cofactor is a divalent metal cation.

Accelerates the degradation of transcripts by removing pyrophosphate from the 5'-end of triphosphorylated RNA, leading to a more labile monophosphorylated state that can stimulate subsequent ribonuclease cleavage. The polypeptide is RNA pyrophosphohydrolase (Aliivibrio fischeri (strain ATCC 700601 / ES114) (Vibrio fischeri)).